Consider the following 376-residue polypeptide: MSGTTISSDRPNICAICHQKAFGYNYEVVSCNACKMFFRRAHAEKIDDFCKKGGKCFDGDDLLTSRPKCRSCRYKKCVNLGMRYHNSSESQTQSDEEPSPKQSVVAVVPQHIITQAHIDSTFFQHLHALNETRYNAYCVINICEDPSFCDLVAQGSKLSVYLRPQEIEWENTERKLKPWGSLGVLLAVEVCKGLSFYNDLLLSDRVLLLKNVAFKSHHLSVAYDSFIQKKGRVLAPTGTEMFPDVLFEIPKCREIIMDLLTSPMKPLMELQITESEYLLLNMIVICNPAIQGMSPSGQDLLSRHQQVYARILLQMCMVSNPRTGPGRYAAILAINQRLDRQSVITNRVVQCLREYWAPNFFFSKILTEACRSDVYY.

The segment at residues 11 to 89 is a DNA-binding region (nuclear receptor); the sequence is PNICAICHQK…LGMRYHNSSE (79 aa). 2 consecutive NR C4-type zinc fingers follow at residues 14-34 and 50-72; these read CAIC…CNAC and CKKG…CRSC. The NR LBD domain occupies 125–371; it reads HLHALNETRY…FSKILTEACR (247 aa).

It belongs to the nuclear hormone receptor family.

The protein resides in the nucleus. Functionally, orphan nuclear receptor. This chain is Nuclear hormone receptor family member nhr-124 (nhr-124), found in Caenorhabditis elegans.